Here is a 27-residue protein sequence, read N- to C-terminus: Nemertide alpha-8 (27 aa).

3 cysteine pairs are disulfide-bonded: Cys-2/Cys-16, Cys-9/Cys-20, and Cys-15/Cys-26.

This sequence belongs to the nemertide family. In terms of tissue distribution, confined to the epidermis and to the mucus layer.

The protein localises to the secreted. Its function is as follows. Highly potent toxin against both insect and some mammalian sodium channels (Nav). It potently inhibits inactivation of insect sodium channels of B.germanica (BgNav1) and also delays the inactivation of mammalian Nav with potent activity on Nav1.3/SCN3A and Nav1.4/SCN4A. 1 uM is enough to completely inhibits the inactivation, resulting in sustained non-inactivating currents. In addition, the toxin significantly enhances the recovery from inactivation, and the open state is not required for the toxin to interact with the channel. In vivo, injection into brine shrimp (Artemia salina) stops movement or causes death after 24 hours (EC(50)=0.4 uM). In Riseriellus occultus (Ribbon worm), this protein is Nemertide alpha-8.